The primary structure comprises 793 residues: Signal transducer and activator of transcription 5A (793 aa).

Phosphotyrosine is present on Tyr-90. Ser-128 is modified (phosphoserine). Residues 589 to 686 (WNDGAILGFV…EVFAKYYTPV (98 aa)) enclose the SH2 domain. Tyr-682 carries the post-translational modification Phosphotyrosine. Tyr-694 bears the Phosphotyrosine; by JAK2 mark. The interval 772-793 (DSLDPRLSPPAGLFTSARSSLS) is disordered. The residue at position 779 (Ser-779) is a Phosphoserine.

The protein belongs to the transcription factor STAT family. As to quaternary structure, forms a homodimer or a heterodimer with a related family member. Binds NR3C1. Interacts with NCOA1 and SOCS7. Interacts with ERBB4. Interacts with EBF4. ISGylated. Post-translationally, tyrosine phosphorylated in response to KITLG/SCF, IL2, IL3, IL7, IL15, CSF2/GMCSF, GH1, PRL, EPO and THPO. Activated KIT promotes phosphorylation on tyrosine residues and subsequent translocation to the nucleus. Tyrosine phosphorylated in response to constitutively activated FGFR1, FGFR2, FGFR3 and FGFR4. Tyrosine phosphorylation is required for DNA-binding activity and dimerization. Serine phosphorylation is also required for maximal transcriptional activity. Tyrosine phosphorylated in response to signaling via activated FLT3; wild-type FLT3 results in much weaker phosphorylation than constitutively activated mutant FLT3. Alternatively, can be phosphorylated by JAK2 at Tyr-694. In terms of tissue distribution, expressed in heart, lung, and weakly in muscle.

It is found in the cytoplasm. The protein resides in the nucleus. Carries out a dual function: signal transduction and activation of transcription. Mediates cellular responses to the cytokine KITLG/SCF and other growth factors. May mediate cellular responses to activated FGFR1, FGFR2, FGFR3 and FGFR4. Binds to the GAS element and activates PRL-induced transcription. Regulates the expression of milk proteins during lactation. This is Signal transducer and activator of transcription 5A (Stat5a) from Rattus norvegicus (Rat).